We begin with the raw amino-acid sequence, 391 residues long: Nucleosome assembly protein 1-like 1 (391 aa).

The segment covering 1-10 (MADIDNKEQS) has biased composition (basic and acidic residues). The interval 1–32 (MADIDNKEQSELDQDLDDVEEVEEEETGEETK) is disordered. The residue at position 2 (Ala2) is an N-acetylalanine. Ser10 carries the phosphoserine modification. Residues 11–28 (ELDQDLDDVEEVEEEETG) are compositionally biased toward acidic residues. 2 positions are modified to phosphothreonine: Thr62 and Thr64. The residue at position 69 (Ser69) is a Phosphoserine. At Lys116 the chain carries N6-acetyllysine. The NAP1L motif motif lies at 125–150 (YEPTEEECEWKPDEEDEISEELKEKA). The segment covering 132–143 (CEWKPDEEDEIS) has biased composition (acidic residues). Residues 132 to 163 (CEWKPDEEDEISEELKEKAKIEDEKKDEEKED) form a disordered region. At Ser143 the chain carries Phosphoserine. Positions 144 to 163 (EELKEKAKIEDEKKDEEKED) are enriched in basic and acidic residues. The Nuclear localization signal signature appears at 273 to 279 (IKKKQKH). Positions 346–376 (AIEDDDDDYDEEGEEADEEGEEEGDEENDPD) are enriched in acidic residues. Residues 346–391 (AIEDDDDDYDEEGEEADEEGEEEGDEENDPDYDPKKDQNPAECKQQ) are disordered. 5-glutamyl polyglycine occurs at positions 359 and 360. Residues 377–391 (YDPKKDQNPAECKQQ) are compositionally biased toward basic and acidic residues. Cys388 is modified (cysteine methyl ester). Cys388 is lipidated: S-farnesyl cysteine. A propeptide spans 389–391 (KQQ) (removed in mature form).

This sequence belongs to the nucleosome assembly protein (NAP) family. In terms of assembly, homodimer. The dimer binds strongly and sequentially to single and double H2A-H2B heterodimers. Interacts with ERCC6; this interaction increases ERCC6 processivity. Interacts with RAD54. Interacts with SETD1A. Post-translationally, polyglycylated by TTLL10 on glutamate residues, resulting in polyglycine chains on the gamma-carboxyl group. Both polyglutamylation and polyglycylation modifications can coexist on the same protein on adjacent residues, and lowering polyglycylation levels increases polyglutamylation, and reciprocally. In terms of processing, polyglutamylated by TTLL4 on glutamate residues, resulting in polyglutamate chains on the gamma-carboxyl group. Both polyglutamylation and polyglycylation modifications can coexist on the same protein on adjacent residues, and lowering polyglycylation levels increases polyglutamylation, and reciprocally.

It localises to the nucleus. The protein localises to the melanosome. Its subcellular location is the cytoplasm. Its function is as follows. Histone chaperone that plays a role in the nuclear import of H2A-H2B and nucleosome assembly. Also participates in several important DNA repair mechanisms: greatly enhances ERCC6-mediated chromatin remodeling which is essential for transcription-coupled nucleotide excision DNA repair. Also stimulates homologous recombination (HR) by RAD51 and RAD54 which is essential in mitotic DNA double strand break (DSB) repair. Plays a key role in the regulation of embryonic neurogenesis. Promotes the proliferation of neural progenitors and inhibits neuronal differentiation during cortical development. Regulates neurogenesis via the modulation of RASSF10; regulates RASSF10 expression by promoting SETD1A-mediated H3K4 methylation at the RASSF10 promoter. The sequence is that of Nucleosome assembly protein 1-like 1 (NAP1L1) from Pongo abelii (Sumatran orangutan).